We begin with the raw amino-acid sequence, 256 residues long: Protein RKD4 (256 aa).

The region spanning 130–216 (EKVTVKKKRN…MEEEVKNLEE (87 aa)) is the RWP-RK domain. The stretch at 190–224 (RKLKSLNSLIKNLKNVGMEEEVKNLEEHRFLIEQE) forms a coiled coil.

It is found in the nucleus. Functionally, putative transcription factor. The sequence is that of Protein RKD4 (RKD4) from Arabidopsis thaliana (Mouse-ear cress).